A 429-amino-acid polypeptide reads, in one-letter code: UDP-N-acetylglucosamine 1-carboxyvinyltransferase (429 aa).

22–23 (KN) provides a ligand contact to phosphoenolpyruvate. A UDP-N-acetyl-alpha-D-glucosamine-binding site is contributed by arginine 102. The Proton donor role is filled by cysteine 126. A 2-(S-cysteinyl)pyruvic acid O-phosphothioketal modification is found at cysteine 126. UDP-N-acetyl-alpha-D-glucosamine contacts are provided by residues 131-135 (RPVDL), aspartate 316, and isoleucine 338.

This sequence belongs to the EPSP synthase family. MurA subfamily.

Its subcellular location is the cytoplasm. The catalysed reaction is phosphoenolpyruvate + UDP-N-acetyl-alpha-D-glucosamine = UDP-N-acetyl-3-O-(1-carboxyvinyl)-alpha-D-glucosamine + phosphate. It functions in the pathway cell wall biogenesis; peptidoglycan biosynthesis. Cell wall formation. Adds enolpyruvyl to UDP-N-acetylglucosamine. In Methylobacterium radiotolerans (strain ATCC 27329 / DSM 1819 / JCM 2831 / NBRC 15690 / NCIMB 10815 / 0-1), this protein is UDP-N-acetylglucosamine 1-carboxyvinyltransferase.